The sequence spans 154 residues: Urease accessory protein UreE (154 aa).

This sequence belongs to the UreE family.

The protein localises to the cytoplasm. Its function is as follows. Involved in urease metallocenter assembly. Binds nickel. Probably functions as a nickel donor during metallocenter assembly. This is Urease accessory protein UreE from Rhizobium meliloti (strain 1021) (Ensifer meliloti).